Reading from the N-terminus, the 1100-residue chain is ATP-dependent DNA helicase mph1 (1100 aa).

Over residues 1-21 the composition is skewed to acidic residues; sequence MSDSDDYLQDDPDDQAFDDFA. A disordered region spans residues 1–250; sequence MSDSDDYLQD…RPSSFMQSSN (250 aa). Residues 38 to 61 are compositionally biased toward low complexity; the sequence is RNQTRNTTSRRNEDNSVASDSDSF. The span at 84-94 shows a compositional bias: basic and acidic residues; sequence FADHPENEASS. Polar residues predominate over residues 104–117; sequence NNPQENIFVTQLTQ. A compositionally biased stretch (pro residues) spans 135–146; sequence PPPPPPPAPTKP. Polar residues-rich tracts occupy residues 182–191 and 200–209; these read RLSFSTAQNS and NAPTNTAQTE. The segment covering 212-223 has biased composition (acidic residues); the sequence is DFLDDIPDDAFD. Over residues 237-249 the composition is skewed to low complexity; sequence SNSSRPSSFMQSS. Positions 317–485 constitute a Helicase ATP-binding domain; it reads ITQKGLFHNL…AVIDGLEISK (169 aa). 330 to 337 contributes to the ATP binding site; the sequence is LPTGLGKT. A DEAH box motif is present at residues 433–436; it reads DEAH. A Helicase C-terminal domain is found at 655 to 829; that stretch reads YLKQVVLNHF…GTRFTFHDDK (175 aa). Disordered stretches follow at residues 850–913 and 1003–1100; these read PEEN…PEPV and RRPA…LGRR. 2 stretches are compositionally biased toward basic residues: residues 863 to 875 and 1019 to 1028; these read RRGR…PKKF and GNKKRLRKGR. Polar residues predominate over residues 1053–1066; the sequence is QPISPEQLLSSFTD. Positions 1082–1092 are enriched in acidic residues; it reads LELDADFEAPD.

It belongs to the DEAD box helicase family. DEAH subfamily. FANCM sub-subfamily. Interacts with the MHF histone-fold complex to form the FANCM-MHF complex.

Its subcellular location is the nucleus. The enzyme catalyses ATP + H2O = ADP + phosphate + H(+). Its function is as follows. ATP-dependent DNA helicase involved in DNA damage repair by homologous recombination and in genome maintenance. Capable of unwinding D-loops. Plays a role in limiting crossover recombinants during mitotic DNA double-strand break (DSB) repair. Component of a FANCM-MHF complex which promotes gene conversion at blocked replication forks, probably by reversal of the stalled fork. This chain is ATP-dependent DNA helicase mph1, found in Aspergillus terreus (strain NIH 2624 / FGSC A1156).